A 250-amino-acid polypeptide reads, in one-letter code: Probable transcriptional regulatory protein RC1_1808 (250 aa).

The tract at residues M1–R21 is disordered.

This sequence belongs to the TACO1 family.

It localises to the cytoplasm. This Rhodospirillum centenum (strain ATCC 51521 / SW) protein is Probable transcriptional regulatory protein RC1_1808.